Reading from the N-terminus, the 339-residue chain is MRQKLEEIKNSAINELKTTLSKDQLEAIRVKYLGKKGELTQILRGMGALSQEERPIVGKVANEVRSYIEETIKEAFSDIKNKEKSIRLENETIDITMPGKKQAVGKRHPLDLTLESMKDIFISMGFTIEEGPEVELDKYNFEALNIPKNHPARGEQDTFYINDNLVLRTQTSPIQIRTMENQKPPIKMIAPGKVYRSDSVDATHSPIFYQMEGLVVDKGITFSDLKGTLELFAKRMFGDKVKTKFRPHHFPFTEPSAEMDATCFVCNGEGCKVCKGSGWIELLGCGMVHPQVLRNCNIDPEVYSGFAFGFGVDRMVMMKYGIDDIRLLYESDMRFLNQF.

Residue Glu254 coordinates Mg(2+).

This sequence belongs to the class-II aminoacyl-tRNA synthetase family. Phe-tRNA synthetase alpha subunit type 1 subfamily. Tetramer of two alpha and two beta subunits. Mg(2+) is required as a cofactor.

Its subcellular location is the cytoplasm. It catalyses the reaction tRNA(Phe) + L-phenylalanine + ATP = L-phenylalanyl-tRNA(Phe) + AMP + diphosphate + H(+). The polypeptide is Phenylalanine--tRNA ligase alpha subunit (Clostridium botulinum (strain ATCC 19397 / Type A)).